Consider the following 591-residue polypeptide: DEAD-box ATP-dependent RNA helicase 30 (591 aa).

A disordered region spans residues 1-109; it reads MSSYDRRFAD…GRGGSSKREL (109 aa). Gly residues predominate over residues 72-103; that stretch reads FSVGRGGGRGGYGQYGDRNGGGNWGGGGGRGG. The Q motif signature appears at 165–193; sequence KMFQDANFPDNILEAIAKLGFTEPTPIQA. Residues 196 to 371 enclose the Helicase ATP-binding domain; that stretch reads WPMALKGRDL…RQFLRDPYKA (176 aa). 209 to 216 contacts ATP; the sequence is AETGSGKT. A DEAD box motif is present at residues 319 to 322; that stretch reads DEAD. Residues 399–544 form the Helicase C-terminal domain; sequence RLLTLLKQLM…VVPPTLSALV (146 aa). Residues 547–591 are disordered; the sequence is SGSGYGGSGGGRNFRPRGGGRGGGFGDKRSRSTSNFVPHGGKRTW. Residues 549–571 are compositionally biased toward gly residues; sequence SGYGGSGGGRNFRPRGGGRGGGF.

The protein belongs to the DEAD box helicase family. DDX5/DBP2 subfamily.

Its subcellular location is the nucleus. It carries out the reaction ATP + H2O = ADP + phosphate + H(+). Its function is as follows. ATP-dependent RNA helicase involved nonsense-mediated mRNA decay and ribosome biogenesis through rRNA processing. The protein is DEAD-box ATP-dependent RNA helicase 30 (RH30) of Arabidopsis thaliana (Mouse-ear cress).